A 207-amino-acid polypeptide reads, in one-letter code: Infectivity protein P11 (207 aa).

Residues 13–28 (WWIVAAIGGLAAFLLL) traverse the membrane as a helical segment. The stretch at 64–95 (AALQANTQLSAQNAQLQAQMDASRLQLETQLN) forms a coiled coil.

It is found in the virion membrane. Functionally, component of the phage ejection machinery. Pilot protein for the formation of the tube that conducts the genome into the target cell. Probably involved in penetration of the bacterial outer membrane and for making the peptidoglycan layer accessible to the viral transglycosylase. Essential for viral infectivity. In Enterobacteria phage PRD1 (Bacteriophage PRD1), this protein is Infectivity protein P11 (XI).